Here is a 157-residue protein sequence, read N- to C-terminus: SUMO-conjugating enzyme UBC9-B (157 aa).

The 154-residue stretch at 4-157 (IALSRLAQER…VRAQAKKFSP (154 aa)) folds into the UBC core domain. The interaction with SUMO1 stretch occupies residues 13 to 18 (RKAWRK). The active-site Glycyl thioester intermediate is the Cys-93.

Belongs to the ubiquitin-conjugating enzyme family. Forms a tight complex with rangap1 and ranbp2. Interacts with vsx1.

It is found in the nucleus. Its pathway is protein modification; protein sumoylation. In terms of biological role, accepts the ubiquitin-like proteins sumo1, sumo2 and sumo3 from the uble1a-uble1b E1 complex and catalyzes their covalent attachment to other proteins with the help of an E3 ligase such as ranbp2 or cbx4. Essential for nuclear architecture and chromosome segregation. Mediates nuclear localization of vsx1. Required for progression through mitosis during organogenesis. In Danio rerio (Zebrafish), this protein is SUMO-conjugating enzyme UBC9-B (ube2ib).